A 498-amino-acid polypeptide reads, in one-letter code: Flavin-dependent halogenase otaD (498 aa).

Gly-14, Gly-17, and Glu-47 together coordinate FAD. Chloride-binding residues include Ser-326 and Gly-327. Val-328 is an FAD binding site.

This sequence belongs to the flavin-dependent halogenase family.

It carries out the reaction ochratoxin B + FADH2 + chloride + O2 = ochratoxin A + FAD + 2 H2O. The protein operates within mycotoxin biosynthesis. Flavin-dependent halogenase; part of the gene cluster that mediates the biosynthesis of ochratoxin A (OTA), a mycotoxin composed of a chlorinated type I polyketide dihydroisocoumarin moiety linked to L-phenylalanine, and demonstrated to have nephrotoxic, immunotoxic, genotoxic, neurotoxic, and teratogenic properties. OtaD chlorinates ochratoxin B (OTB) at the C-5 position to form OTA. The pathway begins with the highly reducing polyketide synthase otaA that catalyzes the formation of the isocoumarin group during the initial stages of biosynthesis, starting from one acetate and 4 malonate units, to originate the characteristic pentaketide skeleton 7-methylmellein (7-MM) of the OTA molecule. The newly identified cyclase otaY might be involved in the polyketide cyclization reaction during the initial steps of the OTA biosynthesis. 7-MM is then oxidized into 7-carboxymellein (also called ochratoxin beta) by the cytochrome P450 monooxygenase otaC. The NRPS encoded by the otaB gene is involved in the linking of phenylalanine to the dihydroisocoumarin ring. The reaction catalyzed by NRPS results in the production of ochratoxin B (OTB), which is the non-chlorinated analog of OTA and which subsequently serves as the substrate of the halogenase otaD for chlorination activity to form the final molecular structure of OTA, containing a chlorine atom in the C-5 position of the molecule. In Aspergillus carbonarius (strain ITEM 5010), this protein is Flavin-dependent halogenase otaD.